The sequence spans 580 residues: Arginine--tRNA ligase (580 aa).

Residues 131-141 (ANPTGPMHVGH) carry the 'HIGH' region motif.

The protein belongs to the class-I aminoacyl-tRNA synthetase family. As to quaternary structure, monomer.

It localises to the cytoplasm. It carries out the reaction tRNA(Arg) + L-arginine + ATP = L-arginyl-tRNA(Arg) + AMP + diphosphate. In Cereibacter sphaeroides (strain ATCC 17025 / ATH 2.4.3) (Rhodobacter sphaeroides), this protein is Arginine--tRNA ligase.